A 467-amino-acid polypeptide reads, in one-letter code: Cytochrome P450 monooxygenase azaI (467 aa).

An N-terminal signal peptide occupies residues 1-28; sequence MESLAQLPGIFLPLAGCVLALSLSALLA. Cys411 provides a ligand contact to heme.

This sequence belongs to the cytochrome P450 family. Requires heme as cofactor.

It participates in secondary metabolite biosynthesis. Cytochrome P450 monooxygenase; part of the gene cluster that mediates the biosynthesis of azaphilones, a class of fungal metabolites characterized by a highly oxygenated pyrano-quinone bicyclic core and exhibiting a broad range of bioactivities. In the first step, the non-reducing polyketide synthase azaA forms the hexaketide precursor from successive condensations of five malonyl-CoA units, presumably with a simple acetyl-CoA starter unit. The reactive polyketide chain then undergoes a PT-mediated C2-C7 cyclization to afford the aromatic ring and is eventually released as an aldehyde through the R-domain. The putative ketoreductase azaE is proposed to catalyze the reduction of the terminal ketone resulting in the early culture product FK17-P2a. The monooxygenase azaH was demonstrated to be the only enzyme required to convert FK17-P2a to azanigerone E. AzaH first hydroxylates the benzaldehyde intermediate FK17-P2a at C4, which triggers the formation of the pyran-ring to afford azanigerone E. In parallel, the 2,4-dimethylhexanoyl chain is synthesized by the HR-PKS azaB and is proposed to be transferred to the C4-hydroxyl of azanigerone E by the acyltransferase azaD directly from the ACP domain of azaB. Alternatively, the 2,4-dimethyl-hexanoyl chain may be offloaded from the HR-PKS as a carboxylic acid and converted to an acyl-CoA by azaF. The resulting acyl-CoA molecule could then be taken up as a substrate by AzaD to form azanigerone B. To yield the carboxylic acid substituent in azanigerone A, the hydroxypropyl side chain of azanigerone B would need to undergo a C-C oxidative cleavage catalyzed by cytochrome P450 AzaI. AzaI is proposed to act on a vicinal diol that leads to a C-C bond scission either through an alkoxyradical intermediate or a peroxy complex. In the biosynthesis of azanigerone A, azanigerone B first undergoes hydroxylation at C10, possibly catalyzed by one of the two FAD-dependent monooxygenases encoded in the cluster, azaG or azaL, resulting in the vicinal diol azanigerone C. Oxidative cleavage of azanigerone C by azaI would yield the corresponding aldehyde derivative of azanigerone A. Finally, the dehydrogenase azaJ is proposed to convert the aldehyde functional group into the carboxylic acid, completing the conversion from azanigerone B to azanigerone A. Alternatively, the oxidation of aldehyde to carboxylic acid may be catalyzed by the same P450 enzyme azaI via consecutive oxidation or by endogenous alcohol dehydrogenase. The polypeptide is Cytochrome P450 monooxygenase azaI (Aspergillus niger (strain ATCC 1015 / CBS 113.46 / FGSC A1144 / LSHB Ac4 / NCTC 3858a / NRRL 328 / USDA 3528.7)).